The chain runs to 1195 residues: Probable beta-tubulin polyglutamylase (1195 aa).

Positions 1 to 110 are disordered; it reads MSQKDIYNKY…QTEMTDNQNE (110 aa). 2 stretches are compositionally biased toward acidic residues: residues 17 to 27 and 44 to 79; these read DQQEEDDDENQ and QGED…EENN. Coiled-coil stretches lie at residues 59 to 103 and 144 to 260; these read DEEQ…QQTE and QDMD…QSEQ. Residues 80 to 89 show a composition bias toward low complexity; it reads QDQQNNSESN. A compositionally biased stretch (polar residues) spans 90–110; sequence LQYDKTNQKNQQTEMTDNQNE. Residues 281-343 form a disordered region; the sequence is PKNDVDQYTG…NKKEQAKKQQ (63 aa). The span at 294 to 316 shows a compositional bias: acidic residues; that stretch reads DSGESDEEANNEDDDEDEDDESE. The span at 322–334 shows a compositional bias: basic residues; sequence RKNKAQLLKKKNN. Residues 350-703 form the TTL domain; the sequence is KQTLVLNVAD…TCKAKNEIIN (354 aa). ATP is bound by residues 500–503, Lys513, and Asp515; that span reads QRYL. The interval 674–756 is c-MTBD region; it reads PLDSYIKKNT…GFERIFPMED (83 aa). Positions 783-862 are disordered; it reads RNTKKVTEDP…ETIQCEDQEQ (80 aa). The span at 825 to 849 shows a compositional bias: polar residues; it reads PNSQTTINKGIPGQNGQRPSSSQLN. The segment covering 850–860 has biased composition (acidic residues); sequence EEGETIQCEDQ.

It is found in the cytoplasm. The protein resides in the cytoskeleton. The protein localises to the cell projection. Its subcellular location is the cilium. It localises to the cilium basal body. Functionally, probable tubulin polyglutamylase with a strong preference for beta-tubulin. The polypeptide is Probable beta-tubulin polyglutamylase (Ttll6a) (Tetrahymena thermophila (strain SB210)).